Consider the following 476-residue polypeptide: Adenosylhomocysteinase (476 aa).

The substrate site is built by Thr-67, Asp-142, and Glu-202. Position 203-205 (203-205) interacts with NAD(+); that stretch reads TTT. Residues Lys-232 and Asp-236 each coordinate substrate. Residues Asn-237, 266-271, Glu-289, Asn-324, 345-347, and Asn-390 contribute to the NAD(+) site; these read GYGDVG and IGH.

The protein belongs to the adenosylhomocysteinase family. NAD(+) serves as cofactor.

The protein resides in the cytoplasm. The catalysed reaction is S-adenosyl-L-homocysteine + H2O = L-homocysteine + adenosine. Its pathway is amino-acid biosynthesis; L-homocysteine biosynthesis; L-homocysteine from S-adenosyl-L-homocysteine: step 1/1. Its function is as follows. May play a key role in the regulation of the intracellular concentration of adenosylhomocysteine. This is Adenosylhomocysteinase from Prochlorococcus marinus (strain MIT 9211).